Here is a 157-residue protein sequence, read N- to C-terminus: Ribonuclease H (157 aa).

The RNase H type-1 domain maps to 1 to 146 (MPDLFAYTDG…ADELARAGMA (146 aa)). Mg(2+) is bound by residues Asp9, Glu52, Asp74, and Asp138.

The protein belongs to the RNase H family. Monomer. Requires Mg(2+) as cofactor.

Its subcellular location is the cytoplasm. It carries out the reaction Endonucleolytic cleavage to 5'-phosphomonoester.. Endonuclease that specifically degrades the RNA of RNA-DNA hybrids. In Ruegeria sp. (strain TM1040) (Silicibacter sp.), this protein is Ribonuclease H.